A 151-amino-acid chain; its full sequence is uncharacterized protein (151 aa).

Residues 1–151 (MAELASIIRP…SSKTTTLKAR (151 aa)) form a disordered region. The segment covering 33–45 (STGLSDLLMLLQS) has biased composition (low complexity). Over residues 53 to 64 (RARRRTVCRPRR) the composition is skewed to basic residues. Residues 108–123 (SSSSNTSSGTATSGES) show a composition bias toward low complexity. Over residues 126–141 (ADWRDSSSASDDDRIP) the composition is skewed to basic and acidic residues.

This is an uncharacterized protein from Aotus trivirgatus (Three-striped night monkey).